The chain runs to 253 residues: Pro-opiomelanocortin A (253 aa).

The first 21 residues, 1 to 21 (MLCPAWLLAVAVVGVVRGVKG), serve as a signal peptide directing secretion. Residue Gln22 is modified to Pyrrolidone carboxylic acid. Intrachain disulfides connect Cys23-Cys45 and Cys29-Cys41. The residue at position 104 (Ser104) is an N-acetylserine; in Corticotropin. The residue at position 116 (Val116) is a Valine amide. The tract at residues 228-253 (QKREQWGREEGEEKRALGERKYHFQG) is disordered. Residue Gln252 is modified to Glutamine amide; partial.

Belongs to the POMC family. Post-translationally, specific enzymatic cleavages at paired basic residues yield the different active peptides. Acetylation of beta-endorphin occurs in a tissue-specific manner. In terms of tissue distribution, C-terminal peptide 1 and C-terminal peptide 2 are detected in the anterior part of the nucleus lateralis tuberis of hypothalamus, in dorsal hypothalamus, thalamus, telencephalon, optic tectum and medulla oblongata (at protein level). Expressed in pituitary and hypothalamus of adult diploid animals, and hypothalamus of triploid and ovulated female trout.

The protein localises to the secreted. Stimulates the adrenal glands to release cortisol. Functionally, melanocyte-stimulating hormone alpha: Anorexigenic peptide. Increases the pigmentation of skin by increasing melanin production in melanocytes. In terms of biological role, melanocyte-stimulating hormone beta: Increases the pigmentation of skin by increasing melanin production in melanocytes. Its function is as follows. Beta-endorphin: Endogenous orexigenic opiate. Endogenous opiate. The chain is Pro-opiomelanocortin A (pomca) from Oncorhynchus mykiss (Rainbow trout).